The sequence spans 219 residues: Probable nicotinate-nucleotide adenylyltransferase (219 aa).

It belongs to the NadD family.

The catalysed reaction is nicotinate beta-D-ribonucleotide + ATP + H(+) = deamido-NAD(+) + diphosphate. The protein operates within cofactor biosynthesis; NAD(+) biosynthesis; deamido-NAD(+) from nicotinate D-ribonucleotide: step 1/1. Functionally, catalyzes the reversible adenylation of nicotinate mononucleotide (NaMN) to nicotinic acid adenine dinucleotide (NaAD). This is Probable nicotinate-nucleotide adenylyltransferase from Pseudoalteromonas atlantica (strain T6c / ATCC BAA-1087).